A 107-amino-acid chain; its full sequence is U1-lycotoxin-Ls1t (107 aa).

The first 20 residues, 1 to 20 (MMKVLVVVALLVTLISYSSS), serve as a signal peptide directing secretion. The propeptide occupies 21–41 (EGIDDLEADELLSLMANEQTR). 4 disulfides stabilise this stretch: cysteine 44–cysteine 59, cysteine 51–cysteine 68, cysteine 58–cysteine 86, and cysteine 70–cysteine 84.

This sequence belongs to the neurotoxin 19 (CSTX) family. 04 (U1-Lctx) subfamily. As to expression, expressed by the venom gland.

It is found in the secreted. The polypeptide is U1-lycotoxin-Ls1t (Lycosa singoriensis (Wolf spider)).